We begin with the raw amino-acid sequence, 151 residues long: Ribosomal RNA large subunit methyltransferase H (151 aa).

Residues Gly-100 and 119-124 (LSKMTF) each bind S-adenosyl-L-methionine.

This sequence belongs to the RNA methyltransferase RlmH family. In terms of assembly, homodimer.

The protein localises to the cytoplasm. It carries out the reaction pseudouridine(1915) in 23S rRNA + S-adenosyl-L-methionine = N(3)-methylpseudouridine(1915) in 23S rRNA + S-adenosyl-L-homocysteine + H(+). In terms of biological role, specifically methylates the pseudouridine at position 1915 (m3Psi1915) in 23S rRNA. This is Ribosomal RNA large subunit methyltransferase H from Thermotoga maritima (strain ATCC 43589 / DSM 3109 / JCM 10099 / NBRC 100826 / MSB8).